A 437-amino-acid polypeptide reads, in one-letter code: Phosphomethylpyrimidine synthase (437 aa).

Substrate contacts are provided by residues Asn-69, Met-98, Tyr-127, His-163, 185–187 (SRG), 226–229 (DACR), and Glu-265. His-269 serves as a coordination point for Zn(2+). A substrate-binding site is contributed by Tyr-292. His-333 is a binding site for Zn(2+). Residues Cys-409, Cys-412, and Cys-416 each contribute to the [4Fe-4S] cluster site.

It belongs to the ThiC family. The cofactor is [4Fe-4S] cluster.

It catalyses the reaction 5-amino-1-(5-phospho-beta-D-ribosyl)imidazole + S-adenosyl-L-methionine = 4-amino-2-methyl-5-(phosphooxymethyl)pyrimidine + CO + 5'-deoxyadenosine + formate + L-methionine + 3 H(+). It functions in the pathway cofactor biosynthesis; thiamine diphosphate biosynthesis. In terms of biological role, catalyzes the synthesis of the hydroxymethylpyrimidine phosphate (HMP-P) moiety of thiamine from aminoimidazole ribotide (AIR) in a radical S-adenosyl-L-methionine (SAM)-dependent reaction. This chain is Phosphomethylpyrimidine synthase, found in Clostridium botulinum (strain Kyoto / Type A2).